We begin with the raw amino-acid sequence, 99 residues long: Integration host factor subunit alpha (99 aa).

A disordered region spans residues 49–71; it reads FGNFDLRDKNQRPGRNPKTGEDI.

It belongs to the bacterial histone-like protein family. In terms of assembly, heterodimer of an alpha and a beta chain.

Its function is as follows. This protein is one of the two subunits of integration host factor, a specific DNA-binding protein that functions in genetic recombination as well as in transcriptional and translational control. The sequence is that of Integration host factor subunit alpha from Shewanella frigidimarina (strain NCIMB 400).